The following is an 889-amino-acid chain: MASTSKNAQRAAASVAHSYHVCLARRMSRLPTLLSNISAPAASKALDRYESKRIHSRSFSSSLAAQRVQRPTSAGPILTNPISDHEKDNDELRSLFDAPPTSSSANHLRSSGPSTGLFEIPSLTSPQNFLVLAQQTLARAQLLVDRIDRAGSADASTAQGIKELKEVVRNLDRLSDLLCGVIDMAELVRNAHPDPEWAEAANAAYEYLCGYMNVLNTHTGLYSVLKNILSIKEVAETLSKEATAVAQVFLRDFEKSGIHLPPAERERFVQLSDEILVLGRGFLQDIAGNDASDDFARIASAQADADKSDMVGLPTHWLEDVNPTILKAVRASAITDTDGLLTFSAADQPWVFQTLLKYAPDERARKVAFRAANYGSQAQVQRLERLLKARAELATLTGASSYAEMALGDKMAKEPQNVEEFLRALTKHHRPRASHDLDKLRRLKHNATVSEPAQNTRQSTFNTNSTLPEFAPWDRDMYTEQHFRSASLSNVQPLSPYLSVGSVFAGLSRLFSALYGIRFRASMVAPGEVWSEGAGDVMKVEVLDESEGARGTSGSAEGLIGTIYADLWSREGKPGGAAHYTVRCSRRVDKDDEAGDFTYGRAEDGRVVRPQDLGGEGCGNPLQAPTFEQRERPGRYQLPVVVLMCDFARPGNANQGPCLLGWHEVETLFHEMGHAIHSMIGRTSYHNVSGTRCATDFVELPSILMEHFVSSPQVVHLLARHHSTGASLPFEHLSSHLAASKSLEGLDTYHQILLARLDQLYHSQLAASPSFSSTTTYSDLDRQMHLPGAPNLSYTEGAHPQVRFGHLFGYGSTYYSYLLDRVIASKVWNHLFANNPLDRYAGQVFKNQCLKYGGGKDPWHILADVLNEDSVRQGDSRAMQQVGKWGIEC.

The N-terminal 30 residues, 1 to 30, are a transit peptide targeting the mitochondrion; the sequence is MASTSKNAQRAAASVAHSYHVCLARRMSRL. Residues 60 to 112 form a disordered region; that stretch reads SSSLAAQRVQRPTSAGPILTNPISDHEKDNDELRSLFDAPPTSSSANHLRSSG. Residues 83–94 are compositionally biased toward basic and acidic residues; the sequence is SDHEKDNDELRS. Over residues 100-112 the composition is skewed to polar residues; that stretch reads PTSSSANHLRSSG. Histidine 670 contacts Zn(2+). Residue glutamate 671 is part of the active site. Zn(2+) contacts are provided by histidine 674 and histidine 677.

It belongs to the peptidase M3 family. The cofactor is Zn(2+).

Its subcellular location is the mitochondrion matrix. It catalyses the reaction Release of an N-terminal octapeptide as second stage of processing of some proteins imported into the mitochondrion.. Its function is as follows. Cleaves proteins, imported into the mitochondrion, to their mature size. While most mitochondrial precursor proteins are processed to the mature form in one step by mitochondrial processing peptidase (MPP), the sequential cleavage by MIP of an octapeptide after initial processing by MPP is a required step for a subgroup of nuclear-encoded precursor proteins destined for the matrix or the inner membrane. This is Mitochondrial intermediate peptidase (OCT1) from Mycosarcoma maydis (Corn smut fungus).